The primary structure comprises 59 residues: Large ribosomal subunit protein bL32 (59 aa).

It belongs to the bacterial ribosomal protein bL32 family.

In Malacoplasma penetrans (strain HF-2) (Mycoplasma penetrans), this protein is Large ribosomal subunit protein bL32.